We begin with the raw amino-acid sequence, 546 residues long: 3-(3-hydroxy-phenyl)propionate/3-hydroxycinnamic acid hydroxylase 2 (546 aa).

Residues 10–39 (SVAIVGAGPNGAALANLLGLYGVDTVVVER) and 278–288 (FVAGRIALVGD) each bind FAD.

It belongs to the PheA/TfdB FAD monooxygenase family. Requires FAD as cofactor.

The enzyme catalyses 3-(3-hydroxyphenyl)propanoate + NADH + O2 + H(+) = 3-(2,3-dihydroxyphenyl)propanoate + NAD(+) + H2O. The catalysed reaction is (2E)-3-(3-hydroxyphenyl)prop-2-enoate + NADH + O2 + H(+) = (2E)-3-(2,3-dihydroxyphenyl)prop-2-enoate + NAD(+) + H2O. It functions in the pathway aromatic compound metabolism; 3-phenylpropanoate degradation. In terms of biological role, catalyzes the insertion of one atom of molecular oxygen into position 2 of the phenyl ring of 3-(3-hydroxyphenyl)propionate (3-HPP) and hydroxycinnamic acid (3HCI). This Burkholderia vietnamiensis (strain G4 / LMG 22486) (Burkholderia cepacia (strain R1808)) protein is 3-(3-hydroxy-phenyl)propionate/3-hydroxycinnamic acid hydroxylase 2.